Here is a 447-residue protein sequence, read N- to C-terminus: Methylenetetrahydrofolate--tRNA-(uracil-5-)-methyltransferase TrmFO (447 aa).

13-18 (GAGLAG) serves as a coordination point for FAD.

Belongs to the MnmG family. TrmFO subfamily. FAD serves as cofactor.

It is found in the cytoplasm. The catalysed reaction is uridine(54) in tRNA + (6R)-5,10-methylene-5,6,7,8-tetrahydrofolate + NADH + H(+) = 5-methyluridine(54) in tRNA + (6S)-5,6,7,8-tetrahydrofolate + NAD(+). It carries out the reaction uridine(54) in tRNA + (6R)-5,10-methylene-5,6,7,8-tetrahydrofolate + NADPH + H(+) = 5-methyluridine(54) in tRNA + (6S)-5,6,7,8-tetrahydrofolate + NADP(+). In terms of biological role, catalyzes the folate-dependent formation of 5-methyl-uridine at position 54 (M-5-U54) in all tRNAs. In Streptococcus thermophilus (strain ATCC BAA-491 / LMD-9), this protein is Methylenetetrahydrofolate--tRNA-(uracil-5-)-methyltransferase TrmFO.